The sequence spans 206 residues: dTTP/UTP pyrophosphatase (206 aa).

The active-site Proton acceptor is aspartate 79.

Belongs to the Maf family. YhdE subfamily. A divalent metal cation serves as cofactor.

It localises to the cytoplasm. It catalyses the reaction dTTP + H2O = dTMP + diphosphate + H(+). It carries out the reaction UTP + H2O = UMP + diphosphate + H(+). In terms of biological role, nucleoside triphosphate pyrophosphatase that hydrolyzes dTTP and UTP. May have a dual role in cell division arrest and in preventing the incorporation of modified nucleotides into cellular nucleic acids. This is dTTP/UTP pyrophosphatase from Rhizobium etli (strain ATCC 51251 / DSM 11541 / JCM 21823 / NBRC 15573 / CFN 42).